We begin with the raw amino-acid sequence, 382 residues long: Sphingosine 1-phosphate receptor 1 (382 aa).

Residues 1–46 (MGSTRIPLVKALHSPVSDYVNYDIIVRHYNYTGKLKISADKDNGIK) are Extracellular-facing. Lys-10 bears the N6-acetyllysine mark. Asn-30 carries N-linked (GlcNAc...) asparagine glycosylation. Residues 47–68 (LISVVFILICCFIILENIFVLL) form a helical membrane-spanning segment. The Cytoplasmic segment spans residues 69 to 82 (TIWKTKKFHRPMYY). A helical membrane pass occupies residues 83–104 (FIGNLALSDLLAGVAYTANLLL). Residues 105 to 116 (SGATTYKLTPAQ) lie on the Extracellular side of the membrane. The chain crosses the membrane as a helical span at residues 117–138 (WFLREGSMFVALSASVFSLLAI). 120–121 (RE) is a sphing-4-enine 1-phosphate binding site. At 139 to 160 (AIERYITMLKMKLHNGSNRFRS) the chain is on the cytoplasmic side. A helical transmembrane segment spans residues 161-182 (FLLISACWVISLILGGLPIMGW). Topologically, residues 183 to 196 (NCISTLPSCSTVLP) are extracellular. Cys-184 and Cys-191 are oxidised to a cystine. A helical transmembrane segment spans residues 197-224 (LYHKHYILFCTTVFTLLLLSIVILYCRI). The Cytoplasmic segment spans residues 225–257 (YSLVRTRSRRLTFRKNISKASRSSEKSLALLKT). Thr-236 is subject to Phosphothreonine; by PKB/AKT1. A helical transmembrane segment spans residues 258-278 (VIIVLGVFIACWAPLFILLLL). 265–269 (FIACW) serves as a coordination point for sphing-4-enine 1-phosphate. Residues 279–289 (DVGCKVKTCDI) lie on the Extracellular side of the membrane. Residues Cys-282 and Cys-287 are joined by a disulfide bond. Residues 290-310 (LFRTEYFLVLAVLNSGTNPII) form a helical membrane-spanning segment. The Cytoplasmic portion of the chain corresponds to 311 to 382 (YTLSNKEMRR…MSSGNVNSSS (72 aa)). Cys-328 carries S-palmitoyl cysteine lipidation. The tract at residues 349–382 (EFSRSKSDNSSHPQKDDGDNPETIMSSGNVNSSS) is disordered. Phosphoserine is present on residues Ser-351 and Ser-353. The segment covering 351–366 (SRSKSDNSSHPQKDDG) has biased composition (basic and acidic residues). Over residues 371 to 382 (TIMSSGNVNSSS) the composition is skewed to polar residues.

It belongs to the G-protein coupled receptor 1 family. In terms of assembly, interacts with GNAI1 and GNAI3. Interacts with CD69; this interaction promotes S1PR1 degradation. S1P-induced endothelial cell migration requires the PKB/AKT1-mediated phosphorylation of the third intracellular loop at the Thr-236 residue. Post-translationally, palmitoylated by ZDHHC5. Palmitoylation is required for targeting to plasma membrane, enabling G(i) coupling.

The protein localises to the cell membrane. The protein resides in the endosome. It localises to the membrane raft. Its function is as follows. G-protein coupled receptor for the bioactive lysosphingolipid sphingosine 1-phosphate (S1P) that seems to be coupled to the G(i) subclass of heteromeric G proteins. Signaling leads to the activation of RAC1, SRC, PTK2/FAK1 and MAP kinases. Plays an important role in cell migration, probably via its role in the reorganization of the actin cytoskeleton and the formation of lamellipodia in response to stimuli that increase the activity of the sphingosine kinase SPHK1. Required for normal chemotaxis toward sphingosine 1-phosphate. Required for normal embryonic heart development and normal cardiac morphogenesis. Plays an important role in the regulation of sprouting angiogenesis and vascular maturation. Inhibits sprouting angiogenesis to prevent excessive sprouting during blood vessel development. Required for normal egress of mature T-cells from the thymus into the blood stream and into peripheral lymphoid organs. Plays a role in the migration of osteoclast precursor cells, the regulation of bone mineralization and bone homeostasis. Plays a role in responses to oxidized 1-palmitoyl-2-arachidonoyl-sn-glycero-3-phosphocholine by pulmonary endothelial cells and in the protection against ventilator-induced lung injury. The polypeptide is Sphingosine 1-phosphate receptor 1 (S1PR1) (Bos taurus (Bovine)).